The primary structure comprises 340 residues: Ketol-acid reductoisomerase (NADP(+)) (340 aa).

A KARI N-terminal Rossmann domain is found at 1 to 183 (MAITVYYDKD…GGGRTGIIET (183 aa)). Residues 26 to 29 (FGSQ), Arg-49, Ser-52, Ser-54, and 84 to 87 (DEIQ) each bind NADP(+). His-109 is a catalytic residue. Gly-135 contributes to the NADP(+) binding site. The KARI C-terminal knotted domain occupies 184–329 (TFKAETETDL…RNLRAMMPWI (146 aa)). Residues Asp-192, Glu-196, Glu-228, and Glu-232 each coordinate Mg(2+). Substrate is bound at residue Ser-253.

Belongs to the ketol-acid reductoisomerase family. It depends on Mg(2+) as a cofactor.

It catalyses the reaction (2R)-2,3-dihydroxy-3-methylbutanoate + NADP(+) = (2S)-2-acetolactate + NADPH + H(+). The catalysed reaction is (2R,3R)-2,3-dihydroxy-3-methylpentanoate + NADP(+) = (S)-2-ethyl-2-hydroxy-3-oxobutanoate + NADPH + H(+). Its pathway is amino-acid biosynthesis; L-isoleucine biosynthesis; L-isoleucine from 2-oxobutanoate: step 2/4. The protein operates within amino-acid biosynthesis; L-valine biosynthesis; L-valine from pyruvate: step 2/4. In terms of biological role, involved in the biosynthesis of branched-chain amino acids (BCAA). Catalyzes an alkyl-migration followed by a ketol-acid reduction of (S)-2-acetolactate (S2AL) to yield (R)-2,3-dihydroxy-isovalerate. In the isomerase reaction, S2AL is rearranged via a Mg-dependent methyl migration to produce 3-hydroxy-3-methyl-2-ketobutyrate (HMKB). In the reductase reaction, this 2-ketoacid undergoes a metal-dependent reduction by NADPH to yield (R)-2,3-dihydroxy-isovalerate. The polypeptide is Ketol-acid reductoisomerase (NADP(+)) (Campylobacter jejuni subsp. doylei (strain ATCC BAA-1458 / RM4099 / 269.97)).